The chain runs to 647 residues: DNA mismatch repair protein MutL (647 aa).

A disordered region spans residues 375–395; sequence KQEEPQAVKQPPQLWQPPKQE. The segment covering 383-395 has biased composition (low complexity); it reads KQPPQLWQPPKQE.

This sequence belongs to the DNA mismatch repair MutL/HexB family.

Functionally, this protein is involved in the repair of mismatches in DNA. It is required for dam-dependent methyl-directed DNA mismatch repair. May act as a 'molecular matchmaker', a protein that promotes the formation of a stable complex between two or more DNA-binding proteins in an ATP-dependent manner without itself being part of a final effector complex. The polypeptide is DNA mismatch repair protein MutL (Bacillus cereus (strain B4264)).